Reading from the N-terminus, the 1783-residue chain is Trans-splicing factor Raa3, chloroplastic (1783 aa).

The transit peptide at M1–S40 directs the protein to the chloroplast. Disordered regions lie at residues A97–N378, A420–Q484, A563–K610, S652–A709, A918–S971, R1395–Q1427, P1476–R1506, and V1620–G1639. Residues D105–G118 are compositionally biased toward gly residues. Low complexity-rich tracts occupy residues Q126–P157, A186–A205, and A224–Q242. The span at D256–I273 shows a compositional bias: basic and acidic residues. A compositionally biased stretch (low complexity) spans A277–P289. Positions L307–S316 are enriched in polar residues. Composition is skewed to low complexity over residues S343–N374, A420–S436, R577–G599, P655–S669, S676–A709, S928–A970, and Q1403–D1417. Composition is skewed to basic residues over residues K1494 to R1506 and V1620 to A1630. Positions L1713–E1772 constitute an RAP domain.

As to quaternary structure, part of a 1700 kDa complex that includes the precursor RNA to exon 1 and the tscA RNA.

The protein localises to the plastid. It is found in the chloroplast stroma. Required for trans-splicing of exons 1 and 2 of the chloroplast encoded psaA mRNA (a group II intron). May be required for stability of the chloroplast RNA-protein complex in which it is found. This Chlamydomonas reinhardtii (Chlamydomonas smithii) protein is Trans-splicing factor Raa3, chloroplastic (RAA3).